A 308-amino-acid chain; its full sequence is Maspardin (308 aa).

The AB hydrolase-1 domain maps to 87-159; it reads FCDGFRKLLD…NSFWLMPAFM (73 aa). At Ser304 the chain carries Phosphoserine.

Belongs to the AB hydrolase superfamily. Interacts with CD4. Interacts with ALDH16A1. In terms of tissue distribution, expressed in all tissues tested, including heart, brain, placenta, lung, liver, skeletal muscle, kidney and pancreas. Expressed in J.CaM1.6, HuT 78 and HeLa cell lines (at protein level).

It localises to the cytoplasm. The protein localises to the cytosol. It is found in the membrane. Its subcellular location is the endosome membrane. The protein resides in the golgi apparatus. It localises to the trans-Golgi network membrane. Functionally, may play a role as a negative regulatory factor in CD4-dependent T-cell activation. This is Maspardin (SPG21) from Homo sapiens (Human).